The primary structure comprises 522 residues: ATP synthase subunit alpha, mitochondrial (522 aa).

Residue 172–179 participates in ATP binding; it reads GDRQTGKT.

This sequence belongs to the ATPase alpha/beta chains family. As to quaternary structure, F-type ATPases have 2 components, CF(1) - the catalytic core - and CF(0) - the membrane proton channel. CF(1) has five subunits: alpha(3), beta(3), gamma(1), delta(1), epsilon(1). CF(0) has three main subunits: a, b and c.

Its subcellular location is the mitochondrion. The protein localises to the mitochondrion inner membrane. Functionally, mitochondrial membrane ATP synthase (F(1)F(0) ATP synthase or Complex V) produces ATP from ADP in the presence of a proton gradient across the membrane which is generated by electron transport complexes of the respiratory chain. F-type ATPases consist of two structural domains, F(1) - containing the extramembraneous catalytic core, and F(0) - containing the membrane proton channel, linked together by a central stalk and a peripheral stalk. During catalysis, ATP synthesis in the catalytic domain of F(1) is coupled via a rotary mechanism of the central stalk subunits to proton translocation. Subunits alpha and beta form the catalytic core in F(1). Rotation of the central stalk against the surrounding alpha(3)beta(3) subunits leads to hydrolysis of ATP in three separate catalytic sites on the beta subunits. Subunit alpha does not bear the catalytic high-affinity ATP-binding sites. This Acanthamoeba castellanii (Amoeba) protein is ATP synthase subunit alpha, mitochondrial (ATP1).